An 899-amino-acid chain; its full sequence is Conserved oligomeric Golgi complex subunit 3 (899 aa).

This sequence belongs to the COG3 family. In terms of assembly, component of the conserved oligomeric Golgi complex which is composed of eight different subunits and is required for normal Golgi morphology and localization.

The protein resides in the golgi apparatus membrane. Its function is as follows. Involved in ER-Golgi transport. In Aedes aegypti (Yellowfever mosquito), this protein is Conserved oligomeric Golgi complex subunit 3.